The sequence spans 211 residues: Protein-L-isoaspartate O-methyltransferase (211 aa).

Ser62 is a catalytic residue.

The protein belongs to the methyltransferase superfamily. L-isoaspartyl/D-aspartyl protein methyltransferase family.

It is found in the cytoplasm. It carries out the reaction [protein]-L-isoaspartate + S-adenosyl-L-methionine = [protein]-L-isoaspartate alpha-methyl ester + S-adenosyl-L-homocysteine. Catalyzes the methyl esterification of L-isoaspartyl residues in peptides and proteins that result from spontaneous decomposition of normal L-aspartyl and L-asparaginyl residues. It plays a role in the repair and/or degradation of damaged proteins. The protein is Protein-L-isoaspartate O-methyltransferase of Shewanella baltica (strain OS195).